The primary structure comprises 270 residues: MPELPEVETTVRGLVPFLEGQRLAAVTTFRPDLRRPFPVDLAQRLTGATVTRLSRRAKYGIVSTDRDDHMIFHLGMSGRWRTEGGEPGKHDHLLLETGAGHRLFLHDPRRFGSIDLVAGDPLASFAAFVTLGPEPLSDDFDAALLARAFAARRAPVKAMLLDQNVVAGLGNIYVCEALNMARISPLMPAAGVPKAKLAALVSAIRAVLTAAIAAGGSTLRDFLSPDGDLGYFAKDWRVYGREGEACECGGAIVRVVQSGRSTFYCRKCQR.

Pro2 functions as the Schiff-base intermediate with DNA in the catalytic mechanism. Glu3 functions as the Proton donor in the catalytic mechanism. The Proton donor; for beta-elimination activity role is filled by Lys58. DNA contacts are provided by His90, Arg109, and Arg152. Residues 237-270 form an FPG-type zinc finger; it reads RVYGREGEACECGGAIVRVVQSGRSTFYCRKCQR. Arg260 (proton donor; for delta-elimination activity) is an active-site residue.

It belongs to the FPG family. As to quaternary structure, monomer. Zn(2+) is required as a cofactor.

The enzyme catalyses Hydrolysis of DNA containing ring-opened 7-methylguanine residues, releasing 2,6-diamino-4-hydroxy-5-(N-methyl)formamidopyrimidine.. It carries out the reaction 2'-deoxyribonucleotide-(2'-deoxyribose 5'-phosphate)-2'-deoxyribonucleotide-DNA = a 3'-end 2'-deoxyribonucleotide-(2,3-dehydro-2,3-deoxyribose 5'-phosphate)-DNA + a 5'-end 5'-phospho-2'-deoxyribonucleoside-DNA + H(+). In terms of biological role, involved in base excision repair of DNA damaged by oxidation or by mutagenic agents. Acts as a DNA glycosylase that recognizes and removes damaged bases. Has a preference for oxidized purines, such as 7,8-dihydro-8-oxoguanine (8-oxoG). Has AP (apurinic/apyrimidinic) lyase activity and introduces nicks in the DNA strand. Cleaves the DNA backbone by beta-delta elimination to generate a single-strand break at the site of the removed base with both 3'- and 5'-phosphates. This is Formamidopyrimidine-DNA glycosylase from Sphingopyxis alaskensis (strain DSM 13593 / LMG 18877 / RB2256) (Sphingomonas alaskensis).